Consider the following 84-residue polypeptide: Cysteine-rich protamine (84 aa).

Intrachain disulfides connect Cys-16–Cys-24 and Cys-64–Cys-80.

As to quaternary structure, cross-linked by interchain disulfide bonds around the DNA-helix. As to expression, testis.

It is found in the nucleus. The protein localises to the chromosome. Protamines substitute for histones in the chromatin of sperm during the haploid phase of spermatogenesis. They compact sperm DNA into a highly condensed, stable and inactive complex. This protamine condenses spermiogenic chromatin in a pattern which comprises fibers with a progressively larger diameter and lamellae that finally undergo definitive coalescence. This Eledone cirrhosa (Curled octopus) protein is Cysteine-rich protamine.